The primary structure comprises 361 residues: Protein RecA (361 aa).

Residue 77-84 (GPESSGKT) coordinates ATP.

The protein belongs to the RecA family.

Its subcellular location is the cytoplasm. In terms of biological role, can catalyze the hydrolysis of ATP in the presence of single-stranded DNA, the ATP-dependent uptake of single-stranded DNA by duplex DNA, and the ATP-dependent hybridization of homologous single-stranded DNAs. It interacts with LexA causing its activation and leading to its autocatalytic cleavage. The protein is Protein RecA of Sinorhizobium fredii (strain NBRC 101917 / NGR234).